Consider the following 161-residue polypeptide: 6,7-dimethyl-8-ribityllumazine synthase (161 aa).

5-amino-6-(D-ribitylamino)uracil is bound by residues Trp-26, 58–60, and 81–83; these read AFE and VVI. 86–87 contributes to the (2S)-2-hydroxy-3-oxobutyl phosphate binding site; that stretch reads GT. Catalysis depends on His-89, which acts as the Proton donor. Phe-114 provides a ligand contact to 5-amino-6-(D-ribitylamino)uracil. Arg-128 provides a ligand contact to (2S)-2-hydroxy-3-oxobutyl phosphate.

It belongs to the DMRL synthase family.

It catalyses the reaction (2S)-2-hydroxy-3-oxobutyl phosphate + 5-amino-6-(D-ribitylamino)uracil = 6,7-dimethyl-8-(1-D-ribityl)lumazine + phosphate + 2 H2O + H(+). The protein operates within cofactor biosynthesis; riboflavin biosynthesis; riboflavin from 2-hydroxy-3-oxobutyl phosphate and 5-amino-6-(D-ribitylamino)uracil: step 1/2. Functionally, catalyzes the formation of 6,7-dimethyl-8-ribityllumazine by condensation of 5-amino-6-(D-ribitylamino)uracil with 3,4-dihydroxy-2-butanone 4-phosphate. This is the penultimate step in the biosynthesis of riboflavin. In Nocardioides sp. (strain ATCC BAA-499 / JS614), this protein is 6,7-dimethyl-8-ribityllumazine synthase.